Here is a 239-residue protein sequence, read N- to C-terminus: Leucine-rich repeat-containing protein 57 (239 aa).

Glycine 2 carries N-myristoyl glycine lipidation. LRR repeat units follow at residues 39-60, 63-85, 86-107, 109-130, 132-153, 154-175, 177-197, and 202-222; these read NLRT…IIGK, LLKS…CNLK, KLET…FGQL, ALKT…LCCL, HLDV…VGEL, QAIE…ISCC, RLKV…PQSI, and QICL…RELE.

It localises to the membrane. The polypeptide is Leucine-rich repeat-containing protein 57 (Lrrc57) (Mus musculus (Mouse)).